Consider the following 304-residue polypeptide: MDVEFFADLDLDALLASFSSSAAAAGSGVSGLFAPSPPHDAEAGSPESVSSRRPSPSREAALSEIERFLMEEGPAAEEGVGAEDFFDALLVDGGEEEEEEEGKGSEAGGSTDGDSGKENEVATPDAEKEDVEAEVDGDDPMSKKKRRQMRNRDSAMKSRERKKMYVKDLETKSKYLEAECRRLSYALQCCAAENMALRQSLLKDRPVGAATAMQESAVLTETLPLVSLLWLVSIVCLLPVPGLPNRNPVARSSAGRDLATVTGKKTSSEQQLEETLLLHGRRCKGSRARIKLDTGPFRLAAAAC.

Topologically, residues 1 to 222 (MDVEFFADLD…MQESAVLTET (222 aa)) are cytoplasmic. Disordered stretches follow at residues 26–60 (GSGV…SREA) and 94–163 (GEEE…ERKK). Residues 45–59 (SPESVSSRRPSPSRE) are compositionally biased toward low complexity. Positions 127–139 (EKEDVEAEVDGDD) are enriched in acidic residues. In terms of domain architecture, bZIP spans 141 to 203 (MSKKKRRQMR…NMALRQSLLK (63 aa)). Residues 143–167 (KKKRRQMRNRDSAMKSRERKKMYVK) form a basic motif region. Basic and acidic residues predominate over residues 150–163 (RNRDSAMKSRERKK). A leucine-zipper region spans residues 169 to 183 (LETKSKYLEAECRRL). A helical membrane pass occupies residues 223 to 243 (LPLVSLLWLVSIVCLLPVPGL). The Lumenal portion of the chain corresponds to 244-304 (PNRNPVARSS…GPFRLAAAAC (61 aa)).

The protein belongs to the bZIP family.

It is found in the endoplasmic reticulum membrane. The protein resides in the nucleus. Its activity is regulated as follows. Transcriptionally activated by IRE1 in response to endoplasmic reticulum (ER) stress. IRE1 cleaves a 20-bp fragment causing a frameshift of the mRNA transcript, leading to a nuclear isoform of the BZIP50 activator. Functionally, transcription factor involved in endoplasmic reticulum (ER) stress response. Acts downstream of the ER stress sensors IRE1, BZIP39 and BZIP60 to activate BiP chaperone genes. The polypeptide is bZIP transcription factor 50 (Oryza sativa subsp. japonica (Rice)).